Consider the following 292-residue polypeptide: Transcription factor-like protein DPA (292 aa).

A disordered region spans residues 1 to 25 (MSMEMELFVTPEKQRQHPSVSVEKT). A DNA-binding region spans residues 51-135 (GGGLRQFSVM…KKEIRWKGLP (85 aa)). The DEF box motif lies at 101-135 (NEKNIRRRVYDALNVFMALDIIARDKKEIRWKGLP). Residues 163-184 (LKELREKVSSLESLMSRNQEMV) adopt a coiled-coil conformation. Positions 246 to 280 (QEQNRVSSSSSTHHQSQHSSAHSSSSSCIASGTSG) are disordered. Positions 252–280 (SSSSSTHHQSQHSSAHSSSSSCIASGTSG) are enriched in low complexity.

It belongs to the E2F/DP family. In terms of assembly, heterodimer with E2F. Interacts preferentially with E2FA and E2FB, but also with E2FC. In terms of tissue distribution, strongly expressed in the actively dividing tissues of the shoot apical meristem, young leaf primordia, the vascular tissues of the maturing leaf primordia and axillary buds.

The protein resides in the cytoplasm. It is found in the nucleus. Functionally, involved in the regulation of the G1/S transition. Increases the DNA binding and the transactivation activities of E2F proteins after heterodimerization. The complex DPA/E2FA promotes cell division and acts as a regulator of the endocycle. Positively regulates the activity of S phase-specific genes. The chain is Transcription factor-like protein DPA (DPA) from Arabidopsis thaliana (Mouse-ear cress).